The following is a 143-amino-acid chain: Transcriptional regulator MraZ (143 aa).

SpoVT-AbrB domains are found at residues Thr5 to Glu47 and Ala76 to Thr119.

This sequence belongs to the MraZ family. As to quaternary structure, forms oligomers.

The protein resides in the cytoplasm. The protein localises to the nucleoid. This chain is Transcriptional regulator MraZ, found in Clavibacter michiganensis subsp. michiganensis (strain NCPPB 382).